The chain runs to 135 residues: Large-conductance mechanosensitive channel (135 aa).

2 consecutive transmembrane segments (helical) span residues A9 to F29 and I79 to I99.

It belongs to the MscL family. In terms of assembly, homopentamer.

It localises to the cell inner membrane. Channel that opens in response to stretch forces in the membrane lipid bilayer. May participate in the regulation of osmotic pressure changes within the cell. This chain is Large-conductance mechanosensitive channel, found in Aeromonas salmonicida (strain A449).